The sequence spans 150 residues: MQIILLEKIGGLGNLGDIVTVKNGYARNFLIPAGKAKRATEANMKEFEARRAELEAKQAEILADARARQEKLDGQTVTVAQKAGVDGRHNGSVTNADIAAAIVAAGIEAVKANVRLPNGPLKAVGEYEVEVALHTDAVAKITVAVIAAAE.

It belongs to the bacterial ribosomal protein bL9 family.

Binds to the 23S rRNA. The chain is Large ribosomal subunit protein bL9 from Neisseria gonorrhoeae.